Here is a 122-residue protein sequence, read N- to C-terminus: Succinate dehydrogenase assembly factor 2, mitochondrial (122 aa).

This sequence belongs to the SDHAF2 family. As to quaternary structure, interacts with the flavoprotein subunit within the SDH catalytic dimer.

The protein localises to the mitochondrion matrix. Its function is as follows. Plays an essential role in the assembly of succinate dehydrogenase (SDH), an enzyme complex (also referred to as respiratory complex II) that is a component of both the tricarboxylic acid (TCA) cycle and the mitochondrial electron transport chain, and which couples the oxidation of succinate to fumarate with the reduction of ubiquinone (coenzyme Q) to ubiquinol. Required for flavinylation (covalent attachment of FAD) of the flavoprotein subunit of the SDH catalytic dimer. This chain is Succinate dehydrogenase assembly factor 2, mitochondrial, found in Caenorhabditis briggsae.